Consider the following 353-residue polypeptide: Cytochrome bc1 complex Rieske iron-sulfur subunit (353 aa).

The disordered stretch occupies residues 1–51; it reads MSSQDIPEENLPAEQDRPHGAAARPADETNPFADPGLPPHEPRVQDVDERA. The span at 40–51 shows a compositional bias: basic and acidic residues; it reads HEPRVQDVDERA. The next 3 membrane-spanning stretches (helical) occupy residues 60–80, 99–119, and 164–184; these read ALLFTLSMLATIAFIAAFVAI, FALGMTLGVALFAIGAGAVHW, and LIRNTMLGALTLVPLSGVVLL. A Rieske domain is found at 246–336; it reads KAALMIIRLE…IGVNDEGYLE (91 aa). [2Fe-2S] cluster-binding residues include C279, H281, C298, and H301. Residues C284 and C300 are joined by a disulfide bond.

It belongs to the Rieske iron-sulfur protein family. As to quaternary structure, the cytochrome bc1 complex is composed of a cytochrome b (QcrB), the Rieske iron-sulfur protein (QcrA) and a diheme cytochrome c (QcrC) subunit. The cofactor is [2Fe-2S] cluster.

The protein localises to the cell membrane. Functionally, iron-sulfur subunit of the cytochrome bc1 complex, an essential component of the respiratory electron transport chain required for ATP synthesis. The bc1 complex catalyzes the oxidation of menaquinol and the reduction of cytochrome c in the respiratory chain. The bc1 complex operates through a Q-cycle mechanism that couples electron transfer to generation of the proton gradient that drives ATP synthesis. The polypeptide is Cytochrome bc1 complex Rieske iron-sulfur subunit (qcrA) (Streptomyces coelicolor (strain ATCC BAA-471 / A3(2) / M145)).